The primary structure comprises 858 residues: Leucine--tRNA ligase (858 aa).

The 'HIGH' region motif lies at 42 to 52 (PYPSGNLHMGH). A compositionally biased stretch (polar residues) spans 584–594 (NPNRSDSSRYI). Residues 584 to 611 (NPNRSDSSRYIPSNLVDPNDPKDPETGE) form a disordered region. A 'KMSKS' region motif is present at residues 619–623 (TMSKS). Lysine 622 contributes to the ATP binding site.

The protein belongs to the class-I aminoacyl-tRNA synthetase family.

The protein localises to the cytoplasm. The enzyme catalyses tRNA(Leu) + L-leucine + ATP = L-leucyl-tRNA(Leu) + AMP + diphosphate. The protein is Leucine--tRNA ligase of Cyanothece sp. (strain PCC 7425 / ATCC 29141).